A 350-amino-acid chain; its full sequence is tRNA uridine(34) hydroxylase (350 aa).

A Rhodanese domain is found at 128 to 221 (EETDYVMIDT…YMKEYPNDQF (94 aa)). Catalysis depends on Cys-181, which acts as the Cysteine persulfide intermediate.

This sequence belongs to the TrhO family.

The catalysed reaction is uridine(34) in tRNA + AH2 + O2 = 5-hydroxyuridine(34) in tRNA + A + H2O. In terms of biological role, catalyzes oxygen-dependent 5-hydroxyuridine (ho5U) modification at position 34 in tRNAs. This Bdellovibrio bacteriovorus (strain ATCC 15356 / DSM 50701 / NCIMB 9529 / HD100) protein is tRNA uridine(34) hydroxylase.